Here is a 179-residue protein sequence, read N- to C-terminus: MARLQKLYREKIAAELKEKFGYTSSMEVPRLTKITLNMGVSEAVADKKVMDNAVADLTKIAGQKPVVTKAKKAIAGFKIREGQAIGCMVTLRGVQMYEFLDRFVTVALPRVRDFRGISGRSFDGRGNYNVGVKEQIIFPEIEYDKVDALRGLNISITTTARTDDECKALLAAFRFPFKN.

This sequence belongs to the universal ribosomal protein uL5 family. Part of the 50S ribosomal subunit; part of the 5S rRNA/L5/L18/L25 subcomplex. Contacts the 5S rRNA and the P site tRNA. Forms a bridge to the 30S subunit in the 70S ribosome.

Functionally, this is one of the proteins that bind and probably mediate the attachment of the 5S RNA into the large ribosomal subunit, where it forms part of the central protuberance. In the 70S ribosome it contacts protein S13 of the 30S subunit (bridge B1b), connecting the 2 subunits; this bridge is implicated in subunit movement. Contacts the P site tRNA; the 5S rRNA and some of its associated proteins might help stabilize positioning of ribosome-bound tRNAs. The chain is Large ribosomal subunit protein uL5 from Delftia acidovorans (strain DSM 14801 / SPH-1).